Consider the following 546-residue polypeptide: Type II methyltransferase M.XhoI (546 aa).

This sequence belongs to the N(4)/N(6)-methyltransferase family.

The catalysed reaction is a 2'-deoxyadenosine in DNA + S-adenosyl-L-methionine = an N(6)-methyl-2'-deoxyadenosine in DNA + S-adenosyl-L-homocysteine + H(+). Functionally, a gamma subtype methylase, recognizes the double-stranded sequence 5'-CTCGAG-3', methylates A-5 on both strands, and protects the DNA from cleavage by the XhoI endonuclease. This is Type II methyltransferase M.XhoI from Xanthomonas vasicola.